A 525-amino-acid polypeptide reads, in one-letter code: Acetyl-CoA hydrolase (525 aa).

A CoA-binding site is contributed by 280-284; it reads GIGNI. The active-site 5-glutamyl coenzyme A thioester intermediate is glutamate 305. The CoA site is built by asparagine 395 and glycine 399.

The protein belongs to the acetyl-CoA hydrolase/transferase family.

It is found in the cytoplasm. It catalyses the reaction acetyl-CoA + H2O = acetate + CoA + H(+). Its function is as follows. Required for utilization of acetate. The chain is Acetyl-CoA hydrolase (acu-8) from Neurospora crassa (strain ATCC 24698 / 74-OR23-1A / CBS 708.71 / DSM 1257 / FGSC 987).